The following is a 608-amino-acid chain: MIKANVYSCSKFRFLYRRRFLSQSSFVHSLDANVSSLIAAVKSCVSIELCRLLHCKVVKSVSYRHGFIGDQLVGCYLRLGHDVCAEKLFDEMPERDLVSWNSLISGYSGRGYLGKCFEVLSRMMISEVGFRPNEVTFLSMISACVYGGSKEEGRCIHGLVMKFGVLEEVKVVNAFINWYGKTGDLTSSCKLFEDLSIKNLVSWNTMIVIHLQNGLAEKGLAYFNMSRRVGHEPDQATFLAVLRSCEDMGVVRLAQGIHGLIMFGGFSGNKCITTALLDLYSKLGRLEDSSTVFHEITSPDSMAWTAMLAAYATHGFGRDAIKHFELMVHYGISPDHVTFTHLLNACSHSGLVEEGKHYFETMSKRYRIDPRLDHYSCMVDLLGRSGLLQDAYGLIKEMPMEPSSGVWGALLGACRVYKDTQLGTKAAERLFELEPRDGRNYVMLSNIYSASGLWKDASRIRNLMKQKGLVRASGCSYIEHGNKIHKFVVGDWSHPESEKIQKKLKEIRKKMKSEMGYKSKTEFVLHDVGEDVKEEMINQHSEKIAMAFGLLVVSPMEPIIIRKNLRICGDCHETAKAISLIEKRRIIIRDSKRFHHFLDGSCSCSDYW.

The N-terminal 28 residues, 1-28 (MIKANVYSCSKFRFLYRRRFLSQSSFVH), are a transit peptide targeting the mitochondrion. PPR repeat units lie at residues 30-64 (LDAN…VSYR), 65-95 (HGFI…MPER), 96-130 (DLVS…EVGF), 133-167 (NEVT…GVLE), 168-198 (EVKV…LSIK), 199-233 (NLVS…GHEP), 234-268 (DQAT…GFSG), 269-299 (NKCI…ITSP), 300-334 (DSMA…GISP), 335-365 (DHVT…MSKR), and 371-401 (RLDH…MPME). The tract at residues 406 to 481 (VWGALLGACR…ASGCSYIEHG (76 aa)) is type E motif. Residues 482–512 (NKIHKFVVGDWSHPESEKIQKKLKEIRKKMK) form a type E(+) motif region. Residues 514-608 (EMGYKSKTEF…DGSCSCSDYW (95 aa)) form a type DYW motif region.

The protein belongs to the PPR family. PCMP-H subfamily.

It localises to the mitochondrion. The polypeptide is Pentatricopeptide repeat-containing protein At5g40410, mitochondrial (PCMP-H15) (Arabidopsis thaliana (Mouse-ear cress)).